Reading from the N-terminus, the 189-residue chain is Mediator of RNA polymerase II transcription subunit 10b (189 aa).

Positions 1 to 22 (MDPTQNTSAGIGGSNGTIRYQT) are disordered.

It belongs to the Mediator complex subunit 10 family. In terms of assembly, component of the Mediator complex.

The protein localises to the nucleus. Component of the Mediator complex, a coactivator involved in the regulated transcription of nearly all RNA polymerase II-dependent genes. Mediator functions as a bridge to convey information from gene-specific regulatory proteins to the basal RNA polymerase II transcription machinery. The Mediator complex, having a compact conformation in its free form, is recruited to promoters by direct interactions with regulatory proteins and serves for the assembly of a functional preinitiation complex with RNA polymerase II and the general transcription factors. This Arabidopsis thaliana (Mouse-ear cress) protein is Mediator of RNA polymerase II transcription subunit 10b (MED10B).